The chain runs to 67 residues: Probable Sec-independent protein translocase protein TatE (67 aa).

A helical membrane pass occupies residues 1–21 (MEGISIAKLLIIGALIVLLFG). Residues 44–67 (KDEDTSAARTTAEETPAERVSHKD) form a disordered region.

Belongs to the TatA/E family. TatE subfamily.

Its subcellular location is the cell inner membrane. Functionally, part of the twin-arginine translocation (Tat) system that transports large folded proteins containing a characteristic twin-arginine motif in their signal peptide across membranes. TatE shares overlapping functions with TatA. The sequence is that of Probable Sec-independent protein translocase protein TatE from Pantoea ananatis (strain LMG 20103).